A 324-amino-acid polypeptide reads, in one-letter code: T-cell acute lymphocytic leukemia protein 1 homolog (324 aa).

The interval 1 to 49 is disordered; it reads MMEKLKSEQFPLSPSAEGCASPPRGDGDARGKQEGTTAETGEHRLPEEL. In terms of domain architecture, bHLH spans 185-237; the sequence is VRRIFTNSRERWRQQNVNGAFAELRKLIPTHPPDKKLSKNEILRLAMKYINFL. The segment at 276-324 is disordered; that stretch reads SPNSSCGSLLDGDASPESFTEDQDSSVESRPSARGLHHSSLPLDGNAQR.

As to expression, expressed in hemopoietic and endothelial lineages. Isoform beta emerges first, expressing in the entire anterior and posterior lateral mesoderm (ALM and PLM respectively), and in the ventral wall of the dorsal aorta, where definitive hemopoiesis begins. Isoform alpha expresses later as two pairs of stripes in the PLM and ALM, and becomes restricted to the intermediate cell mass (ICM) by the 18-somite stage. The ICM is the key site of primitive hemopoiesis, giving rise to the erythroid lineage. Also expressed in all stages of endocardial cell migration and in the developing midbrain, hindbrain and spinal cord. In adults, expressed in the main hemopoietic organs, namely the kidney (where isoform alpha is the predominant isoform) and the spleen. Also expressed in the liver, gill and gonads.

It localises to the nucleus. Transcription factor that plays a pivotal role in hemopoietic and endothelial development, acting synergistically with lmo2 and downstream of clo. Specifies mesodermal precursors to a hemangioblast cell fate. Hemangioblasts are bipotential precursors of blood and endothelium, and in the absence of hemopoietic induction cues such as gata1, tal1/scl-lmo2-induced hemangioblasts differentiate into endothelial cells. Isoform alpha and isoform beta are redundant for the initiation of primitive hemopoiesis but have distinct roles in the regulation of primitive erythroid differentiation and definitive hemopoietic stem cell specification, most likely due to differences in expression levels. Specification of definitive hemopoietic stem cells requires isoform beta. DNA binding is required for erythroid maturation, but not for its other hemopoietic functions. Endothelial roles include development of the dorsal aorta, the site of definitive hemopoiesis in the embryo. Required for angiogenesis but not angioblast specification. Has an additional role in endocardium formation during heart development. May play a role in central nervous system development. The polypeptide is T-cell acute lymphocytic leukemia protein 1 homolog (Danio rerio (Zebrafish)).